The sequence spans 61 residues: Large ribosomal subunit protein bL32 (61 aa).

The segment at M1 to D20 is disordered. Residues K7 to H19 show a composition bias toward basic residues.

Belongs to the bacterial ribosomal protein bL32 family.

The sequence is that of Large ribosomal subunit protein bL32 from Buchnera aphidicola subsp. Cinara cedri (strain Cc).